Reading from the N-terminus, the 315-residue chain is Methionyl-tRNA formyltransferase (315 aa).

113–116 (SILP) contacts (6S)-5,6,7,8-tetrahydrofolate.

This sequence belongs to the Fmt family.

The catalysed reaction is L-methionyl-tRNA(fMet) + (6R)-10-formyltetrahydrofolate = N-formyl-L-methionyl-tRNA(fMet) + (6S)-5,6,7,8-tetrahydrofolate + H(+). In terms of biological role, attaches a formyl group to the free amino group of methionyl-tRNA(fMet). The formyl group appears to play a dual role in the initiator identity of N-formylmethionyl-tRNA by promoting its recognition by IF2 and preventing the misappropriation of this tRNA by the elongation apparatus. The chain is Methionyl-tRNA formyltransferase from Vibrio cholerae serotype O1 (strain ATCC 39541 / Classical Ogawa 395 / O395).